A 460-amino-acid polypeptide reads, in one-letter code: Mitochondrial distribution and morphology protein 34 (460 aa).

In terms of domain architecture, SMP-LTD spans 1–196; that stretch reads MSFKFDWESL…LPGIIHRLSQ (196 aa). The span at 304–321 shows a compositional bias: basic residues; that stretch reads HNHQAPKRRTIKYKRKSK. Disordered regions lie at residues 304–356 and 368–460; these read HNHQ…PSRE and EPSS…AYSG. Composition is skewed to low complexity over residues 330–355 and 393–405; these read STEVTTRETTPLPTSSTPLETSTPSR and SPPSLDLSIDTSL.

This sequence belongs to the MDM34 family. In terms of assembly, component of the ER-mitochondria encounter structure (ERMES) or MDM complex, composed of MMM1, MDM10, MDM12 and MDM34.

Its subcellular location is the mitochondrion outer membrane. Component of the ERMES/MDM complex, which serves as a molecular tether to connect the endoplasmic reticulum (ER) and mitochondria. Components of this complex are involved in the control of mitochondrial shape and protein biogenesis, and function in nonvesicular lipid trafficking between the ER and mitochondria. MDM34 is required for the interaction of the ER-resident membrane protein MMM1 and the outer mitochondrial membrane-resident beta-barrel protein MDM10. This chain is Mitochondrial distribution and morphology protein 34, found in Yarrowia lipolytica (strain CLIB 122 / E 150) (Yeast).